The primary structure comprises 425 residues: Glutamyl-tRNA reductase (425 aa).

Residues 49-52 (TCNR), serine 109, 114-116 (EGQ), and glutamine 120 contribute to the substrate site. The active-site Nucleophile is cysteine 50. 189 to 194 (GAGETG) serves as a coordination point for NADP(+).

The protein belongs to the glutamyl-tRNA reductase family. Homodimer.

The enzyme catalyses (S)-4-amino-5-oxopentanoate + tRNA(Glu) + NADP(+) = L-glutamyl-tRNA(Glu) + NADPH + H(+). The protein operates within porphyrin-containing compound metabolism; protoporphyrin-IX biosynthesis; 5-aminolevulinate from L-glutamyl-tRNA(Glu): step 1/2. It functions in the pathway porphyrin-containing compound metabolism; chlorophyll biosynthesis. Catalyzes the NADPH-dependent reduction of glutamyl-tRNA(Glu) to glutamate 1-semialdehyde (GSA). This Chlorobium luteolum (strain DSM 273 / BCRC 81028 / 2530) (Pelodictyon luteolum) protein is Glutamyl-tRNA reductase.